A 143-amino-acid polypeptide reads, in one-letter code: Phosphoribosyl-AMP cyclohydrolase (143 aa).

Asp86 contributes to the Mg(2+) binding site. Zn(2+) is bound at residue Cys87. Mg(2+)-binding residues include Asp88 and Asp90. Positions 103 and 110 each coordinate Zn(2+).

The protein belongs to the PRA-CH family. Homodimer. Mg(2+) serves as cofactor. The cofactor is Zn(2+).

It is found in the cytoplasm. The catalysed reaction is 1-(5-phospho-beta-D-ribosyl)-5'-AMP + H2O = 1-(5-phospho-beta-D-ribosyl)-5-[(5-phospho-beta-D-ribosylamino)methylideneamino]imidazole-4-carboxamide. The protein operates within amino-acid biosynthesis; L-histidine biosynthesis; L-histidine from 5-phospho-alpha-D-ribose 1-diphosphate: step 3/9. Functionally, catalyzes the hydrolysis of the adenine ring of phosphoribosyl-AMP. This is Phosphoribosyl-AMP cyclohydrolase from Rhodospirillum rubrum (strain ATCC 11170 / ATH 1.1.1 / DSM 467 / LMG 4362 / NCIMB 8255 / S1).